A 486-amino-acid chain; its full sequence is 3-sulfolactaldehyde dehydrogenase (486 aa).

NADP(+) is bound by residues 157 to 158, 181 to 184, and 234 to 235; these read WN, RPAS, and GS. Catalysis depends on Glu-256, which acts as the Proton acceptor. Leu-257 lines the NADP(+) pocket. Cys-290 functions as the Nucleophile in the catalytic mechanism. NADP(+) is bound at residue Glu-387.

The protein belongs to the aldehyde dehydrogenase family.

It carries out the reaction (2S)-3-sulfolactaldehyde + NADP(+) + H2O = (2S)-3-sulfolactate + NADPH + 2 H(+). It catalyses the reaction (2S)-3-sulfolactaldehyde + NAD(+) + H2O = (2S)-3-sulfolactate + NADH + 2 H(+). Catalyzes the oxidation of (2S)-3-sulfolactaldehyde to (2S)-3-sulfolactate, using both NAD(+) and NADP(+) as electron acceptors. Is involved in a degradation pathway of sulfoquinovose (SQ) that allows P.putida SQ1 to use SQ as the sole carbon and energy source for growth. The protein is 3-sulfolactaldehyde dehydrogenase of Pseudomonas putida (Arthrobacter siderocapsulatus).